The sequence spans 189 residues: Elongation factor P (189 aa).

Lys34 bears the N6-(3,6-diaminohexanoyl)-5-hydroxylysine mark.

It belongs to the elongation factor P family. In terms of processing, may be beta-lysylated on the epsilon-amino group of Lys-34 by the combined action of EpmA and EpmB, and then hydroxylated on the C5 position of the same residue by EpmC (if this protein is present). Lysylation is critical for the stimulatory effect of EF-P on peptide-bond formation. The lysylation moiety may extend toward the peptidyltransferase center and stabilize the terminal 3-CCA end of the tRNA. Hydroxylation of the C5 position on Lys-34 may allow additional potential stabilizing hydrogen-bond interactions with the P-tRNA.

It is found in the cytoplasm. It functions in the pathway protein biosynthesis; polypeptide chain elongation. In terms of biological role, involved in peptide bond synthesis. Alleviates ribosome stalling that occurs when 3 or more consecutive Pro residues or the sequence PPG is present in a protein, possibly by augmenting the peptidyl transferase activity of the ribosome. Modification of Lys-34 is required for alleviation. This Francisella tularensis subsp. tularensis (strain FSC 198) protein is Elongation factor P.